A 46-amino-acid chain; its full sequence is MRLHTGEKPYHCTHCERQFVQVANLRRHLRVHTGERPYACELCTSK.

C2H2-type zinc fingers lie at residues 1–4, 10–32, and 38–46; these read MRLH, YHCT…LRVH, and YACELCTSK.

The protein belongs to the krueppel C2H2-type zinc-finger protein family.

It is found in the nucleus. In terms of biological role, krueppel is a gap class segmentation protein. In Lithobius forficatus (Centipede), this protein is Protein krueppel (Kr).